We begin with the raw amino-acid sequence, 166 residues long: Small ribosomal subunit protein uS5 (166 aa).

The region spanning 11 to 74 (LIEKLVSVKR…ENAKKNMVSV (64 aa)) is the S5 DRBM domain.

Belongs to the universal ribosomal protein uS5 family. Part of the 30S ribosomal subunit. Contacts proteins S4 and S8.

Its function is as follows. With S4 and S12 plays an important role in translational accuracy. Located at the back of the 30S subunit body where it stabilizes the conformation of the head with respect to the body. This chain is Small ribosomal subunit protein uS5, found in Francisella tularensis subsp. holarctica (strain LVS).